The primary structure comprises 705 residues: Dolichyl-diphosphooligosaccharide--protein glycosyltransferase subunit STT3A (705 aa).

The Cytoplasmic segment spans residues 1-17 (MTKLGFLRLSYEKQDTL). Residues 18 to 38 (LKLLILSMAAVLSFSTRLFAV) traverse the membrane as a helical segment. Residues 39–119 (LRFESVIHEF…IDIRNVCVFL (81 aa)) lie on the Lumenal side of the membrane. The DXD motif 1 signature appears at 47–49 (EFD). Asp49 is a Mn(2+) binding site. Residues 120 to 138 (APLFSSFTTIVTYHLTKEL) traverse the membrane as a helical segment. The Cytoplasmic portion of the chain corresponds to 139-140 (KD). The helical transmembrane segment at 141-158 (AGAGLLAAAMIAVVPGYI) threads the bilayer. Residues 159–169 (SRSVAGSYDNE) are Lumenal-facing. 2 residues coordinate Mn(2+): Asp167 and Glu169. Positions 167-169 (DNE) match the DXD motif 2 motif. Residues 170-189 (GIAIFCMLLTYYMWIKAVKT) traverse the membrane as a helical segment. The Cytoplasmic portion of the chain corresponds to 190-191 (GS). The chain crosses the membrane as a helical span at residues 192-206 (IYWAAKCALAYFYMV). Residues 207–211 (SSWGG) lie on the Lumenal side of the membrane. Residues 212–228 (YVFLINLIPLHVLVLML) traverse the membrane as a helical segment. The Cytoplasmic segment spans residues 229–233 (TGRFS). Residues 234 to 259 (HRIYVAYCTVYCLGTILSMQISFVGF) form a helical membrane-spanning segment. The Lumenal portion of the chain corresponds to 260–267 (QPVLSSEH). Residues 268–287 (MAAFGVFGLCQIHAFVDYLR) traverse the membrane as a helical segment. At 288–300 (SKLNPQQFEVLFR) the chain is on the cytoplasmic side. Residues 301 to 321 (SVISLVGFVLLTVGALLMLTG) form a helical membrane-spanning segment. The Lumenal portion of the chain corresponds to 322-356 (KISPWTGRFYSLLDPSYAKNNIPIIASVSEHQPTT). The SVSE motif motif lies at 348–351 (SVSE). The helical transmembrane segment at 357–379 (WSSYYFDLQLLVFMFPVGLYYCF) threads the bilayer. The Cytoplasmic segment spans residues 380 to 385 (SNLSDA). A helical transmembrane segment spans residues 386 to 402 (RIFIIMYGVTSMYFSAV). The Lumenal segment spans residues 403-406 (MVRL). Arg405 contributes to the dolichyl diphosphooligosaccharide binding site. A helical transmembrane segment spans residues 407–428 (MLVLAPVMCILSGIGVSQVLST). Residues 429–453 (YMKNLDISRPDKKSKKQQDSTYPIK) lie on the Cytoplasmic side of the membrane. The chain crosses the membrane as a helical span at residues 454-473 (NEVASGMILVMAFFLITYTF). The Lumenal portion of the chain corresponds to 474-705 (HSTWVTSEAY…DLDNRGLSRT (232 aa)). The segment at 525–527 (WWD) is interacts with target acceptor peptide in protein substrate. Positions 525 to 529 (WWDYG) match the WWDYG motif motif. Residue Tyr530 participates in dolichyl diphosphooligosaccharide binding. N-linked (GlcNAc...) asparagine glycosylation is found at Asn537 and Asn544. Asn548 is a glycosylation site (N-linked (GlcNAc...) (high mannose) asparagine). Residues 592–599 (DINKFLWM) carry the DK motif motif.

The protein belongs to the STT3 family. In terms of assembly, component of the oligosaccharyltransferase (OST) complex. There are 2 OST complexes, OST-A and OST-B, which contain STT3A or STT3B as catalytic subunit, respectively. OST-A and OST-B contain common core subunits RPN1, RPN2, OST48, OST4, DAD1 and TMEM258, and OST-A contains DC2/OSTC and KRTCAP2/KCP2 specific accessory subunits. OST-A complex assembly occurs through the formation of 3 subcomplexes. Subcomplex 1 contains RPN1 and TMEM258, subcomplex 2 contains the OST-A-specific subunits STT3A, DC2/OSTC, and KCP2 as well as the core subunit OST4, and subcomplex 3 contains RPN2, DAD1, and OST48. The OST-A complex can form stable complexes with the Sec61 complex or with both the Sec61 and TRAP complexes. Mg(2+) is required as a cofactor. Mn(2+) serves as cofactor.

The protein localises to the endoplasmic reticulum. The protein resides in the endoplasmic reticulum membrane. It catalyses the reaction a di-trans,poly-cis-dolichyl diphosphooligosaccharide + L-asparaginyl-[protein] = N(4)-(oligosaccharide-(1-&gt;4)-N-acetyl-beta-D-glucosaminyl-(1-&gt;4)-N-acetyl-beta-D-glucosaminyl)-L-asparaginyl-[protein] + a di-trans,poly-cis-dolichyl diphosphate + H(+). The protein operates within protein modification; protein glycosylation. Catalytic subunit of the oligosaccharyl transferase (OST) complex that catalyzes the initial transfer of a defined glycan (Glc(3)Man(9)GlcNAc(2) in eukaryotes) from the lipid carrier dolichol-pyrophosphate to an asparagine residue within an Asn-X-Ser/Thr consensus motif in nascent polypeptide chains, the first step in protein N-glycosylation. N-glycosylation occurs cotranslationally and the complex associates with the Sec61 complex at the channel-forming translocon complex that mediates protein translocation across the endoplasmic reticulum (ER). All subunits are required for a maximal enzyme activity. This subunit contains the active site and the acceptor peptide and donor lipid-linked oligosaccharide (LLO) binding pockets. STT3A is present in the majority of OST complexes and mediates cotranslational N-glycosylation of most sites on target proteins, while STT3B-containing complexes are required for efficient post-translational glycosylation and mediate glycosylation of sites that have been skipped by STT3A. STT3A-containing OST-A complex is also required to prevent hyperglycosylation of some target proteins by preventing glycosylation of facultative sites before folding of target proteins is completed. The chain is Dolichyl-diphosphooligosaccharide--protein glycosyltransferase subunit STT3A from Mus musculus (Mouse).